The chain runs to 556 residues: 2-succinyl-5-enolpyruvyl-6-hydroxy-3-cyclohexene-1-carboxylate synthase (556 aa).

Belongs to the TPP enzyme family. MenD subfamily. As to quaternary structure, homodimer. Requires Mg(2+) as cofactor. Mn(2+) is required as a cofactor. The cofactor is thiamine diphosphate.

It carries out the reaction isochorismate + 2-oxoglutarate + H(+) = 5-enolpyruvoyl-6-hydroxy-2-succinyl-cyclohex-3-ene-1-carboxylate + CO2. It functions in the pathway quinol/quinone metabolism; 1,4-dihydroxy-2-naphthoate biosynthesis; 1,4-dihydroxy-2-naphthoate from chorismate: step 2/7. The protein operates within quinol/quinone metabolism; menaquinone biosynthesis. Catalyzes the thiamine diphosphate-dependent decarboxylation of 2-oxoglutarate and the subsequent addition of the resulting succinic semialdehyde-thiamine pyrophosphate anion to isochorismate to yield 2-succinyl-5-enolpyruvyl-6-hydroxy-3-cyclohexene-1-carboxylate (SEPHCHC). The chain is 2-succinyl-5-enolpyruvyl-6-hydroxy-3-cyclohexene-1-carboxylate synthase from Escherichia coli O45:K1 (strain S88 / ExPEC).